A 471-amino-acid chain; its full sequence is uncharacterized protein (471 aa).

11 helical membrane passes run Leu15 to Leu35, Pro66 to Val86, Ala89 to Met109, Trp147 to Gln167, Phe179 to Ile199, Glu210 to Met230, Ala237 to Ala257, Val303 to Ala323, Gly353 to Phe373, Leu386 to Gly406, and Ile410 to Leu430.

This sequence belongs to the alanine or glycine:cation symporter (AGCS) (TC 2.A.25) family.

It localises to the cell membrane. This is an uncharacterized protein from Bacillus subtilis (strain 168).